The primary structure comprises 752 residues: MRISPPEREAKKVKIVIDKDPVSTSFDKWAVPGHFSRTLAKGPKTTTWIWNLHADVHDFDSYTSDLEDVSRKIFSAHFGHLAVVFIWLSGAYFHGARFSNYEAWLSNPTTIKPSAQVVWPIVGQEILNGDVGGGFQGIQITSGLFQMWRASGITTELQLYVTAIGALVMAALMLFAGWFHYHKAAPKLEWFQNAESMMNHHLAGLFGLGSLSWAGHQIHVSLPVNKLLDSGVSPQEIPLPHEFILNKDLIAQLYPSFGQGLTPFFTLNWNEYSDFLTFKGGLNPVTGGLWLSDRAHHHLAIAVLFIVAGHMYRTNWGIGHSMKEMLETHKGPFTGEGHKGLYEIFTNSWHAQLSLNLALFGSLSIIVAHHMYSMPPYPYLATDYATSLCLFTHHVWIGGFLIVGAGAHAAIFMVRDYDPAQNYNNLLDRVLRHRDAIISHLNWVCIFLGFHSFGLYIHNDTMRALGRPQDMFSDAAIQLQPVFAQWVQGVNSAAAGNTAPNALRNASYAFGGDIVSVGEKVAMMPISLGTADFLVHHIHAFTIHVTVLILLKGVLFARNSRLIPDKANLGFRFPCDGPGRGGTCQVSAWDHVFLGLFWMYNSLSVVLFHFSWKMQSDVWGNVTADGAVSHITGNNFAQSSITINGWLRDFLWAQASQVIQSYGSALSAYGLMFLGAHFIWAFSLMFLFSGRGYWQELIESIVWAHNKLKFAPSIQPRALSITQGRAVGVAHYLLGGIATTWSFFHARIISVG.

Transmembrane regions (helical) follow at residues 73 to 96 (IFSA…FHGA), 159 to 182 (LYVT…FHYH), 198 to 222 (MNHH…HVSL), 294 to 312 (RAHH…GHMY), 349 to 372 (WHAQ…HHMY), 388 to 414 (LCLF…IFMV), 436 to 458 (AIIS…LYIH), and 533 to 551 (FLVH…LILL). The [4Fe-4S] cluster site is built by cysteine 575 and cysteine 584. A run of 2 helical transmembrane segments spans residues 591 to 612 (HVFL…HFSW) and 666 to 688 (LSAY…MFLF). Histidine 677 lines the chlorophyll a' pocket. Positions 685 and 693 each coordinate chlorophyll a. Tryptophan 694 provides a ligand contact to phylloquinone. The chain crosses the membrane as a helical span at residues 726 to 746 (AVGVAHYLLGGIATTWSFFHA).

Belongs to the PsaA/PsaB family. The PsaA/B heterodimer binds the P700 chlorophyll special pair and subsequent electron acceptors. PSI consists of a core antenna complex that captures photons, and an electron transfer chain that converts photonic excitation into a charge separation. The eukaryotic PSI reaction center is composed of at least 11 subunits. Requires P700 is a chlorophyll a/chlorophyll a' dimer, A0 is one or more chlorophyll a, A1 is one or both phylloquinones and FX is a shared 4Fe-4S iron-sulfur center. as cofactor.

Its subcellular location is the plastid. The protein localises to the cyanelle thylakoid membrane. It carries out the reaction reduced [plastocyanin] + hnu + oxidized [2Fe-2S]-[ferredoxin] = oxidized [plastocyanin] + reduced [2Fe-2S]-[ferredoxin]. PsaA and PsaB bind P700, the primary electron donor of photosystem I (PSI), as well as the electron acceptors A0, A1 and FX. PSI is a cytochrome c6-ferredoxin oxidoreductase, converting photonic excitation into a charge separation, which transfers an electron from the donor P700 chlorophyll pair to the spectroscopically characterized acceptors A0, A1, FX, FA and FB in turn. Oxidized P700 is reduced on the lumenal side of the thylakoid membrane by cytochrome c6. This Cyanophora paradoxa protein is Photosystem I P700 chlorophyll a apoprotein A1.